Reading from the N-terminus, the 346-residue chain is UDP-3-O-acylglucosamine N-acyltransferase (346 aa).

The active-site Proton acceptor is histidine 253.

This sequence belongs to the transferase hexapeptide repeat family. LpxD subfamily. In terms of assembly, homotrimer.

It carries out the reaction a UDP-3-O-[(3R)-3-hydroxyacyl]-alpha-D-glucosamine + a (3R)-hydroxyacyl-[ACP] = a UDP-2-N,3-O-bis[(3R)-3-hydroxyacyl]-alpha-D-glucosamine + holo-[ACP] + H(+). The protein operates within bacterial outer membrane biogenesis; LPS lipid A biosynthesis. Catalyzes the N-acylation of UDP-3-O-acylglucosamine using 3-hydroxyacyl-ACP as the acyl donor. Is involved in the biosynthesis of lipid A, a phosphorylated glycolipid that anchors the lipopolysaccharide to the outer membrane of the cell. This Rickettsia akari (strain Hartford) protein is UDP-3-O-acylglucosamine N-acyltransferase.